The following is a 200-amino-acid chain: ATP-dependent Clp protease proteolytic subunit (200 aa).

S97 serves as the catalytic Nucleophile. The active site involves H122.

The protein belongs to the peptidase S14 family. In terms of assembly, fourteen ClpP subunits assemble into 2 heptameric rings which stack back to back to give a disk-like structure with a central cavity, resembling the structure of eukaryotic proteasomes.

It is found in the cytoplasm. It carries out the reaction Hydrolysis of proteins to small peptides in the presence of ATP and magnesium. alpha-casein is the usual test substrate. In the absence of ATP, only oligopeptides shorter than five residues are hydrolyzed (such as succinyl-Leu-Tyr-|-NHMec, and Leu-Tyr-Leu-|-Tyr-Trp, in which cleavage of the -Tyr-|-Leu- and -Tyr-|-Trp bonds also occurs).. Its function is as follows. Cleaves peptides in various proteins in a process that requires ATP hydrolysis. Has a chymotrypsin-like activity. Plays a major role in the degradation of misfolded proteins. The sequence is that of ATP-dependent Clp protease proteolytic subunit from Oleidesulfovibrio alaskensis (strain ATCC BAA-1058 / DSM 17464 / G20) (Desulfovibrio alaskensis).